The following is a 457-amino-acid chain: Argininosuccinate lyase (457 aa).

This sequence belongs to the lyase 1 family. Argininosuccinate lyase subfamily.

The protein localises to the cytoplasm. It catalyses the reaction 2-(N(omega)-L-arginino)succinate = fumarate + L-arginine. It functions in the pathway amino-acid biosynthesis; L-arginine biosynthesis; L-arginine from L-ornithine and carbamoyl phosphate: step 3/3. This is Argininosuccinate lyase from Exiguobacterium sibiricum (strain DSM 17290 / CCUG 55495 / CIP 109462 / JCM 13490 / 255-15).